We begin with the raw amino-acid sequence, 178 residues long: ATP synthase subunit b, chloroplastic (178 aa).

The chain crosses the membrane as a helical span at residues 23–43 (IFETNIINLAAVVAIVISFVG).

The protein belongs to the ATPase B chain family. As to quaternary structure, F-type ATPases have 2 components, F(1) - the catalytic core - and F(0) - the membrane proton channel. F(1) has five subunits: alpha(3), beta(3), gamma(1), delta(1), epsilon(1). F(0) has four main subunits: a(1), b(1), b'(1) and c(10-14). The alpha and beta chains form an alternating ring which encloses part of the gamma chain. F(1) is attached to F(0) by a central stalk formed by the gamma and epsilon chains, while a peripheral stalk is formed by the delta, b and b' chains.

Its subcellular location is the plastid. It localises to the chloroplast thylakoid membrane. F(1)F(0) ATP synthase produces ATP from ADP in the presence of a proton or sodium gradient. F-type ATPases consist of two structural domains, F(1) containing the extramembraneous catalytic core and F(0) containing the membrane proton channel, linked together by a central stalk and a peripheral stalk. During catalysis, ATP synthesis in the catalytic domain of F(1) is coupled via a rotary mechanism of the central stalk subunits to proton translocation. Functionally, component of the F(0) channel, it forms part of the peripheral stalk, linking F(1) to F(0). The polypeptide is ATP synthase subunit b, chloroplastic (Tetradesmus obliquus (Green alga)).